The sequence spans 138 residues: Protein FAM216B (138 aa).

Belongs to the FAM216 family.

The chain is Protein FAM216B (Fam216b) from Mus musculus (Mouse).